The following is a 232-amino-acid chain: Large ribosomal subunit protein uL1 (232 aa).

The protein belongs to the universal ribosomal protein uL1 family. Part of the 50S ribosomal subunit.

Binds directly to 23S rRNA. The L1 stalk is quite mobile in the ribosome, and is involved in E site tRNA release. In terms of biological role, protein L1 is also a translational repressor protein, it controls the translation of the L11 operon by binding to its mRNA. This chain is Large ribosomal subunit protein uL1, found in Chlamydia pneumoniae (Chlamydophila pneumoniae).